We begin with the raw amino-acid sequence, 216 residues long: Fibroblast growth factor 19 (216 aa).

A signal peptide spans 1-24 (MRSGCVVVHVWILAGLWLAVAGRP). Intrachain disulfides connect Cys-58–Cys-70 and Cys-102–Cys-120.

This sequence belongs to the heparin-binding growth factors family. In terms of assembly, interacts with FGFR1, FGFR2, FGFR3 and FGFR4. Affinity between fibroblast growth factors (FGFs) and their receptors is increased by KL, KLB and heparan sulfate glycosaminoglycans that function as coreceptors. Interacts with KL; this interaction is direct. Interacts with KLB; this interaction is direct. Interacts with FGFR4 in the presence of heparin, KL or KLB. Interacts with MALRD1. In terms of tissue distribution, expressed in fetal brain, cartilage, retina, and adult gall bladder.

The protein localises to the secreted. Involved in the suppression of bile acid biosynthesis through down-regulation of CYP7A1 expression, following positive regulation of the JNK and ERK1/2 cascades. Stimulates glucose uptake in adipocytes. Activity requires the presence of KLB and FGFR4. In Homo sapiens (Human), this protein is Fibroblast growth factor 19 (FGF19).